The following is a 399-amino-acid chain: Acetate kinase (399 aa).

Asn-7 contacts Mg(2+). Lys-14 contacts ATP. A substrate-binding site is contributed by Arg-91. The Proton donor/acceptor role is filled by Asp-148. Residues His-208–Gly-212, Asp-283–Arg-285, and Gly-331–Asn-335 contribute to the ATP site. Residue Glu-384 coordinates Mg(2+).

The protein belongs to the acetokinase family. As to quaternary structure, homodimer. Mg(2+) serves as cofactor. Mn(2+) is required as a cofactor.

The protein localises to the cytoplasm. It carries out the reaction acetate + ATP = acetyl phosphate + ADP. It functions in the pathway metabolic intermediate biosynthesis; acetyl-CoA biosynthesis; acetyl-CoA from acetate: step 1/2. Its function is as follows. Catalyzes the formation of acetyl phosphate from acetate and ATP. Can also catalyze the reverse reaction. This Desulfitobacterium hafniense (strain Y51) protein is Acetate kinase.